The primary structure comprises 399 residues: Bombesin receptor subtype-3 (399 aa).

Residues 1–31 (MSQRQPQSPNQTLISTTNDTESSSSVVPNDS) are compositionally biased toward polar residues. Residues 1 to 38 (MSQRQPQSPNQTLISTTNDTESSSSVVPNDSTNKRRTG) are disordered. Over 1 to 41 (MSQRQPQSPNQTLISTTNDTESSSSVVPNDSTNKRRTGDNS) the chain is Extracellular. Asn-10, Asn-18, and Asn-29 each carry an N-linked (GlcNAc...) asparagine glycan. The helical transmembrane segment at 42 to 63 (PGIEALCAIYITYAVIISVGIL) threads the bilayer. Over 64–82 (GNAILIKVFFKTKSMQTVP) the chain is Cytoplasmic. Residues 83-103 (NIFITSLAFGDLLLLLTCVPV) traverse the membrane as a helical segment. Residues 104–121 (DVTHYLAEGWLFGRIGCK) are Extracellular-facing. A disulfide bridge links Cys-120 with Cys-203. A helical transmembrane segment spans residues 122-143 (VLSFIRLTSVGVSVFTLTILSA). At 144-163 (DRYKAVVKPLERQPPNAILK) the chain is on the cytoplasmic side. A helical membrane pass occupies residues 164-184 (TCAKAGCIWIMSMIIALPEAI). Residues 185 to 220 (FSNVYTFQDPDKNVTFKACASYPVSERLLQEIHSLL) are Extracellular-facing. A helical transmembrane segment spans residues 221–241 (CFLVFYIIPLSIISVYYSLIA). Residues 242–272 (RTLYKSTLNIPTEEQRHARKQIESRKRIAKT) lie on the Cytoplasmic side of the membrane. A helical membrane pass occupies residues 273-293 (VLVLVALFALCWLPNHLLYLY). At 294 to 313 (RSFTSQTYMDSSTVHLFVTI) the chain is on the extracellular side. Residues 314–333 (ISRILAFSNSCVNPFALYWL) form a helical membrane-spanning segment. The Cytoplasmic portion of the chain corresponds to 334–399 (SNTFQQHFKA…CSVKKEDDRV (66 aa)).

Belongs to the G-protein coupled receptor 1 family. As to quaternary structure, interacts with C6orf89.

Its subcellular location is the cell membrane. Its function is as follows. Role in sperm cell division, maturation, or function. This receptor mediates its action by association with G proteins that activate a phosphatidylinositol-calcium second messenger system. The sequence is that of Bombesin receptor subtype-3 (BRS3) from Ovis aries (Sheep).